Reading from the N-terminus, the 219-residue chain is Guanylate kinase (219 aa).

The 180-residue stretch at 15-194 (GLMLVISSPS…AFSSVRAIVE (180 aa)) folds into the Guanylate kinase-like domain. 22–29 (SPSGAGKS) contributes to the ATP binding site.

This sequence belongs to the guanylate kinase family.

It localises to the cytoplasm. The enzyme catalyses GMP + ATP = GDP + ADP. In terms of biological role, essential for recycling GMP and indirectly, cGMP. The polypeptide is Guanylate kinase (Rhizobium meliloti (strain 1021) (Ensifer meliloti)).